The chain runs to 519 residues: Cytochrome P450 monooxygenase AtmP (519 aa).

The helical transmembrane segment at 21-41 (SMLLVVTLVILFLWFIIPSPV) threads the bilayer. Cysteine 457 contributes to the heme binding site.

It belongs to the cytochrome P450 family. Heme is required as a cofactor.

It localises to the membrane. The protein operates within secondary metabolite biosynthesis. Its function is as follows. Cytochrome P450 monooxygenase; part of the ATM2 gene cluster that mediates the biosynthesis of aflatrem, a tremorgenic mycotoxin with acute neurotoxic effects. Synthesis of geranylgeranyl diphosphate (GGPP) by AtmG (a GGPP synthase) precedes condensation of GGPP with indole 3-glycerol phosphate, followed by epoxidation and cyclization by AtmM (a FAD-dependent monooxygenase) and AtmC (a prenyltransferase) to produce paspaline. AtmB is also essential for paspaline production, but its exact role has not been identified yet. AtmP, a cytochrome P450 monooxygenase, subsequently converts paspaline to 13-desoxypaxilline via PC-M6 by removal of the C-30 methyl group and oxidation at C-10. AtmQ, a cytochrome P450 monooxygenase, then catalyzes the oxidation of 13-desoxypaxilline, first at C-7 to produce paspalicine and then at C-13 to form paspalinine. Finally, AtmD prenylates paspalinine to form aflatrem. The sequence is that of Cytochrome P450 monooxygenase AtmP from Aspergillus flavus.